A 704-amino-acid polypeptide reads, in one-letter code: Elongation factor G (704 aa).

Residues 8-291 enclose the tr-type G domain; the sequence is DKVRNIGIMA…AVVEYLASPV (284 aa). Residues 17–24, 90–94, and 144–147 each bind GTP; these read AHIDAGKT, DTPGH, and NKMD.

It belongs to the TRAFAC class translation factor GTPase superfamily. Classic translation factor GTPase family. EF-G/EF-2 subfamily.

The protein resides in the cytoplasm. Its function is as follows. Catalyzes the GTP-dependent ribosomal translocation step during translation elongation. During this step, the ribosome changes from the pre-translocational (PRE) to the post-translocational (POST) state as the newly formed A-site-bound peptidyl-tRNA and P-site-bound deacylated tRNA move to the P and E sites, respectively. Catalyzes the coordinated movement of the two tRNA molecules, the mRNA and conformational changes in the ribosome. This chain is Elongation factor G, found in Chlorobium phaeobacteroides (strain DSM 266 / SMG 266 / 2430).